A 173-amino-acid polypeptide reads, in one-letter code: Calcium-binding protein 5 (173 aa).

4 consecutive EF-hand domains span residues 28–63, 82–99, 105–140, and 142–173; these read DEIE…MGYM, GRVD…KLLA, IGVQ…LLGD, and LTSQ…MMSR. Ca(2+) is bound by residues Asp-41, Asp-43, Asp-45, and Asp-52. The Ca(2+) site is built by Asp-118, Asn-120, Asp-122, Glu-124, Glu-129, Asp-155, Asn-157, Asp-159, Thr-161, and Glu-166.

In terms of assembly, interacts with CACNA1C (via C-terminal CDB motif) in a calcium-dependent manner. Interacts with STXBP1. Interacts with MYO6. In terms of tissue distribution, expressed in the retina (at protein level).

The protein resides in the cytoplasm. Inhibits calcium-dependent inactivation of L-type calcium channel and shifts voltage dependence of activation to more depolarized membrane potentials. Involved in the transmission of light signals. May positively regulate neurotransmitter vesicle endocytosis and exocytosis in a salt-dependent manner. May play a role in the extension and network organization of neurites. The chain is Calcium-binding protein 5 (CABP5) from Bos taurus (Bovine).